Reading from the N-terminus, the 261-residue chain is 5'-nucleotidase SurE (261 aa).

Residues D8, D9, S43, and N96 each coordinate a divalent metal cation.

It belongs to the SurE nucleotidase family. Requires a divalent metal cation as cofactor.

The protein resides in the cytoplasm. The enzyme catalyses a ribonucleoside 5'-phosphate + H2O = a ribonucleoside + phosphate. Nucleotidase that shows phosphatase activity on nucleoside 5'-monophosphates. This Roseobacter denitrificans (strain ATCC 33942 / OCh 114) (Erythrobacter sp. (strain OCh 114)) protein is 5'-nucleotidase SurE.